Consider the following 284-residue polypeptide: L-ribulose-5-phosphate 3-epimerase UlaE (284 aa).

Belongs to the L-ribulose-5-phosphate 3-epimerase family.

The enzyme catalyses L-ribulose 5-phosphate = L-xylulose 5-phosphate. The protein operates within cofactor degradation; L-ascorbate degradation; D-xylulose 5-phosphate from L-ascorbate: step 3/4. Catalyzes the isomerization of L-xylulose-5-phosphate to L-ribulose-5-phosphate. Is involved in the anaerobic L-ascorbate utilization. The chain is L-ribulose-5-phosphate 3-epimerase UlaE from Escherichia coli (strain SMS-3-5 / SECEC).